The primary structure comprises 214 residues: ATP phosphoribosyltransferase (214 aa).

It belongs to the ATP phosphoribosyltransferase family. Short subfamily. As to quaternary structure, heteromultimer composed of HisG and HisZ subunits.

It is found in the cytoplasm. It catalyses the reaction 1-(5-phospho-beta-D-ribosyl)-ATP + diphosphate = 5-phospho-alpha-D-ribose 1-diphosphate + ATP. Its pathway is amino-acid biosynthesis; L-histidine biosynthesis; L-histidine from 5-phospho-alpha-D-ribose 1-diphosphate: step 1/9. Catalyzes the condensation of ATP and 5-phosphoribose 1-diphosphate to form N'-(5'-phosphoribosyl)-ATP (PR-ATP). Has a crucial role in the pathway because the rate of histidine biosynthesis seems to be controlled primarily by regulation of HisG enzymatic activity. This Leptothrix cholodnii (strain ATCC 51168 / LMG 8142 / SP-6) (Leptothrix discophora (strain SP-6)) protein is ATP phosphoribosyltransferase.